Here is a 500-residue protein sequence, read N- to C-terminus: Protein FAM114A2 (500 aa).

The tract at residues 1 to 82 is disordered; that stretch reads MSNKDDLETA…AAGKETVSKD (82 aa). 3 positions are modified to phosphoserine: Ser-93, Ser-152, and Ser-215.

Belongs to the FAM114 family.

This chain is Protein FAM114A2 (FAM114A1), found in Bos taurus (Bovine).